Here is a 314-residue protein sequence, read N- to C-terminus: Methionyl-tRNA formyltransferase (314 aa).

Residue 113-116 (SLLP) participates in (6S)-5,6,7,8-tetrahydrofolate binding.

Belongs to the Fmt family.

The enzyme catalyses L-methionyl-tRNA(fMet) + (6R)-10-formyltetrahydrofolate = N-formyl-L-methionyl-tRNA(fMet) + (6S)-5,6,7,8-tetrahydrofolate + H(+). Functionally, attaches a formyl group to the free amino group of methionyl-tRNA(fMet). The formyl group appears to play a dual role in the initiator identity of N-formylmethionyl-tRNA by promoting its recognition by IF2 and preventing the misappropriation of this tRNA by the elongation apparatus. The sequence is that of Methionyl-tRNA formyltransferase from Pseudomonas savastanoi pv. phaseolicola (strain 1448A / Race 6) (Pseudomonas syringae pv. phaseolicola (strain 1448A / Race 6)).